A 139-amino-acid chain; its full sequence is ATP synthase epsilon chain (139 aa).

Belongs to the ATPase epsilon chain family. As to quaternary structure, F-type ATPases have 2 components, CF(1) - the catalytic core - and CF(0) - the membrane proton channel. CF(1) has five subunits: alpha(3), beta(3), gamma(1), delta(1), epsilon(1). CF(0) has three main subunits: a, b and c.

Its subcellular location is the cell inner membrane. Functionally, produces ATP from ADP in the presence of a proton gradient across the membrane. This Haemophilus ducreyi (strain 35000HP / ATCC 700724) protein is ATP synthase epsilon chain.